A 64-amino-acid chain; its full sequence is EEIIDVAYQSPEMEVGFNVSYLLDVLNTLKCERVRFNLVDASSSCLIEDCDNSTAEYVIMPMRL.

The protein belongs to the beta sliding clamp family. As to quaternary structure, forms a ring-shaped head-to-tail homodimer around DNA which binds and tethers DNA polymerases and other proteins to the DNA. The DNA replisome complex has a single clamp-loading complex (3 tau and 1 each of delta, delta', psi and chi subunits) which binds 3 Pol III cores (1 core on the leading strand and 2 on the lagging strand) each with a beta sliding clamp dimer. Additional proteins in the replisome are other copies of gamma, psi and chi, Ssb, DNA helicase and RNA primase.

It is found in the cytoplasm. In terms of biological role, confers DNA tethering and processivity to DNA polymerases and other proteins. Acts as a clamp, forming a ring around DNA (a reaction catalyzed by the clamp-loading complex) which diffuses in an ATP-independent manner freely and bidirectionally along dsDNA. Initially characterized for its ability to contact the catalytic subunit of DNA polymerase III (Pol III), a complex, multichain enzyme responsible for most of the replicative synthesis in bacteria; Pol III exhibits 3'-5' exonuclease proofreading activity. The beta chain is required for initiation of replication as well as for processivity of DNA replication. This chain is Beta sliding clamp (dnaN), found in Actinobacillus pleuropneumoniae (Haemophilus pleuropneumoniae).